A 160-amino-acid polypeptide reads, in one-letter code: Troponin C, isoform 2 (160 aa).

EF-hand domains follow at residues 15 to 50 (DQIE…MGQA), 51 to 86 (FEER…FVVN), 92 to 127 (GLEE…LDDN), and 128 to 160 (VSEE…MSGE). Ca(2+)-binding residues include D64, D66, S68, E70, and E75. Residues D141, D143, S145, T147, and E152 each coordinate Ca(2+).

This sequence belongs to the troponin C family. Pharyngeal muscle.

This chain is Troponin C, isoform 2 (tnc-2), found in Caenorhabditis elegans.